The following is a 238-amino-acid chain: Ion-translocating oxidoreductase complex subunit E (238 aa).

5 helical membrane-spanning segments follow: residues 41–61 (LGLG…VSLV), 71–91 (LPAF…LMQA), 95–115 (ELYQ…VILG), 130–150 (SFDG…LGGL), and 184–204 (GFLL…LIAL).

It belongs to the NqrDE/RnfAE family. As to quaternary structure, the complex is composed of six subunits: RnfA, RnfB, RnfC, RnfD, RnfE and RnfG.

The protein localises to the cell inner membrane. Part of a membrane-bound complex that couples electron transfer with translocation of ions across the membrane. In Pseudomonas aeruginosa (strain LESB58), this protein is Ion-translocating oxidoreductase complex subunit E.